We begin with the raw amino-acid sequence, 211 residues long: Secreted phosphoprotein 24 (211 aa).

The N-terminal stretch at 1 to 29 is a signal peptide; the sequence is MISRMEKMTMMMKILIMFALGMNYWSCSG. Intrachain disulfides connect cysteine 92–cysteine 103 and cysteine 116–cysteine 134. Serine 96 is modified (phosphoserine). Serine 145, serine 146, serine 170, serine 173, and serine 182 each carry phosphoserine.

It belongs to the SPP2 family. Post-translationally, phosphorylation sites are present in the extracellular medium. Detected in liver and plasma.

The protein localises to the secreted. Could coordinate an aspect of bone turnover. The polypeptide is Secreted phosphoprotein 24 (SPP2) (Homo sapiens (Human)).